A 377-amino-acid polypeptide reads, in one-letter code: Chaperone protein DnaJ (377 aa).

In terms of domain architecture, J spans 5–70; that stretch reads DYYQVLGVSR…KKRSAYDQLG (66 aa). The segment at 138–216 adopts a CR-type zinc-finger fold; the sequence is GVTKIISFKT…CYGEGRYINT (79 aa). 8 residues coordinate Zn(2+): Cys151, Cys154, Cys168, Cys171, Cys190, Cys193, Cys204, and Cys207. 4 CXXCXGXG motif repeats span residues 151–158, 168–175, 190–197, and 204–211; these read CDACAGKG, CPTCRGSG, CQTCRGAG, and CTKCYGEG.

It belongs to the DnaJ family. As to quaternary structure, homodimer. Zn(2+) serves as cofactor.

Its subcellular location is the cytoplasm. Its function is as follows. Participates actively in the response to hyperosmotic and heat shock by preventing the aggregation of stress-denatured proteins and by disaggregating proteins, also in an autonomous, DnaK-independent fashion. Unfolded proteins bind initially to DnaJ; upon interaction with the DnaJ-bound protein, DnaK hydrolyzes its bound ATP, resulting in the formation of a stable complex. GrpE releases ADP from DnaK; ATP binding to DnaK triggers the release of the substrate protein, thus completing the reaction cycle. Several rounds of ATP-dependent interactions between DnaJ, DnaK and GrpE are required for fully efficient folding. Also involved, together with DnaK and GrpE, in the DNA replication of plasmids through activation of initiation proteins. The polypeptide is Chaperone protein DnaJ (Orientia tsutsugamushi (strain Boryong) (Rickettsia tsutsugamushi)).